Here is a 229-residue protein sequence, read N- to C-terminus: Peptidase E (229 aa).

Active-site charge relay system residues include S120, D135, and H157.

It belongs to the peptidase S51 family.

The protein resides in the cytoplasm. It catalyses the reaction Dipeptidase E catalyzes the hydrolysis of dipeptides Asp-|-Xaa. It does not act on peptides with N-terminal Glu, Asn or Gln, nor does it cleave isoaspartyl peptides.. Functionally, hydrolyzes dipeptides containing N-terminal aspartate residues. May play a role in allowing the cell to use peptide aspartate to spare carbon otherwise required for the synthesis of the aspartate family of amino acids. The protein is Peptidase E of Escherichia coli O6:K15:H31 (strain 536 / UPEC).